A 442-amino-acid chain; its full sequence is Cytokine receptor-like factor 3 (442 aa).

Residues 10 to 46 (EVLLQEARENVEAAQSYRRELGQRLQGLREAQRQIKE) adopt a coiled-coil conformation. Positions 181–274 (PPVQIEELIE…PQTGHSTLVP (94 aa)) constitute a Fibronectin type-III domain.

It belongs to the cytokine receptor-like factor 3 family.

The protein localises to the cytoplasm. Its function is as follows. May play a role in the negative regulation of cell cycle progression. The protein is Cytokine receptor-like factor 3 (Crlf3) of Mus musculus (Mouse).